A 652-amino-acid polypeptide reads, in one-letter code: Engulfment and cell motility protein 3 (652 aa).

An ELMO domain is found at 307-479 (EQREQLQALR…VVREQLARTL (173 aa)).

As to quaternary structure, probably interacts directly with the SH3-domain of DOCK1 via its SH3-binding site. Part of a complex with DOCK1 and RAC1. Interacts with ADGRB3.

It is found in the cytoplasm. In terms of biological role, involved in cytoskeletal rearrangements required for phagocytosis of apoptotic cells and cell motility. Acts in association with DOCK1 and CRK. Was initially proposed to be required in complex with DOCK1 to activate Rac Rho small GTPases. May enhance the guanine nucleotide exchange factor (GEF) activity of DOCK1. The polypeptide is Engulfment and cell motility protein 3 (ELMO3) (Bos taurus (Bovine)).